The following is a 515-amino-acid chain: Maturase K (515 aa).

Belongs to the intron maturase 2 family. MatK subfamily.

The protein localises to the plastid. It localises to the chloroplast. In terms of biological role, usually encoded in the trnK tRNA gene intron. Probably assists in splicing its own and other chloroplast group II introns. The polypeptide is Maturase K (Picea engelmannii (Engelmann's spruce)).